Here is a 494-residue protein sequence, read N- to C-terminus: Serine/arginine-rich splicing factor 4 (494 aa).

Residues 2–72 form the RRM 1 domain; that stretch reads PRVYIGRLSY…ERVIVEHARG (71 aa). 2 disordered regions span residues 72–95 and 169–494; these read GPRRDGSYGSGRSGYGYRRSGRDK and KIRL…HSRS. Residues Ser-78 and Ser-84 each carry the phosphoserine modification. One can recognise an RRM 2 domain in the interval 104 to 177; that stretch reads YRLIVENLSS…RKIRLVEDKP (74 aa). Basic residues-rich tracts occupy residues 179-206 and 214-246; these read SRRRRSYSRSRSHSRSRSRSRHSRKSRS and SHSKSRSRSRSGSRSRSKSRSRSQSRSRSKKEK. Positions 247 to 256 are enriched in basic and acidic residues; sequence SRSPSKEKSR. The segment covering 257–267 has biased composition (basic residues); the sequence is SRSHSAGKSRS. Positions 268-278 are enriched in basic and acidic residues; that stretch reads KSKDQAEEKIQ. A compositionally biased stretch (basic residues) spans 286 to 302; the sequence is PKSRSPSRHKSKSKSRS. Ser-288, Ser-290, and Ser-292 each carry phosphoserine. Residues 303–327 show a composition bias toward basic and acidic residues; the sequence is RSQERRVEEEKRGSVSRGRSQEKSL. 2 stretches are compositionally biased toward basic residues: residues 328-359 and 367-382; these read RQSRSRSRSKGGSRSRSRSRSKSKDKRKGRKR and RSRSRSKSERSRKRGS. Over residues 411–431 the composition is skewed to basic and acidic residues; sequence VSKEREHAKSESSQREGRGES. Phosphoserine is present on residues Ser-431, Ser-446, Ser-456, Ser-458, and Ser-460. The segment covering 449–460 has biased composition (low complexity); the sequence is KSKPNLPSESRS. Basic residues predominate over residues 461–494; that stretch reads RSKSASKTRSRSKSRSRSASRSPSRSRSRSHSRS.

This sequence belongs to the splicing factor SR family. Found in a pre-mRNA splicing complex with SRSF4/SFRS4, SRSF5/SFRS5, SNRNP70, SNRPA1, SRRM1 and SRRM2. Interacts with PNN. Post-translationally, extensively phosphorylated on serine residues in the RS domain.

The protein resides in the nucleus speckle. Plays a role in alternative splice site selection during pre-mRNA splicing. Represses the splicing of MAPT/Tau exon 10. The polypeptide is Serine/arginine-rich splicing factor 4 (SRSF4) (Homo sapiens (Human)).